A 209-amino-acid polypeptide reads, in one-letter code: Uracil phosphoribosyltransferase (209 aa).

5-phospho-alpha-D-ribose 1-diphosphate contacts are provided by residues R79, R104, and 131–139; that span reads DPMLATGNS. Residues I194 and 199-201 each bind uracil; that span reads GDA. Position 200 (D200) interacts with 5-phospho-alpha-D-ribose 1-diphosphate.

Belongs to the UPRTase family. Mg(2+) serves as cofactor.

It carries out the reaction UMP + diphosphate = 5-phospho-alpha-D-ribose 1-diphosphate + uracil. The protein operates within pyrimidine metabolism; UMP biosynthesis via salvage pathway; UMP from uracil: step 1/1. Its activity is regulated as follows. Allosterically activated by GTP. Its function is as follows. Catalyzes the conversion of uracil and 5-phospho-alpha-D-ribose 1-diphosphate (PRPP) to UMP and diphosphate. The sequence is that of Uracil phosphoribosyltransferase from Rhizobium etli (strain CIAT 652).